A 463-amino-acid chain; its full sequence is Methionine aminopeptidase 2-2 (463 aa).

The tract at residues 1–97 is disordered; the sequence is MGSKSPEGHW…TLSVTELKQT (97 aa). Positions 27–36 are enriched in polar residues; that stretch reads DPQTSQNGSG. Over residues 46-57 the composition is skewed to acidic residues; the sequence is GDDDDDDEDAEE. Basic residues predominate over residues 69-85; sequence KKKKRKKSNKKKKKKTK. Polar residues predominate over residues 86-97; it reads SGTLSVTELKQT. His215 serves as a coordination point for substrate. A divalent metal cation contacts are provided by Asp236, Asp247, and His316. Residue His324 participates in substrate binding. Residues Glu349 and Glu444 each contribute to the a divalent metal cation site.

Belongs to the peptidase M24A family. Methionine aminopeptidase eukaryotic type 2 subfamily. The cofactor is Co(2+). It depends on Zn(2+) as a cofactor. Mn(2+) is required as a cofactor. Requires Fe(2+) as cofactor.

Its subcellular location is the cytoplasm. The catalysed reaction is Release of N-terminal amino acids, preferentially methionine, from peptides and arylamides.. In terms of biological role, cotranslationally removes the N-terminal methionine from nascent proteins. The N-terminal methionine is often cleaved when the second residue in the primary sequence is small and uncharged (Met-Ala-, Cys, Gly, Pro, Ser, Thr, or Val). The sequence is that of Methionine aminopeptidase 2-2 from Neosartorya fischeri (strain ATCC 1020 / DSM 3700 / CBS 544.65 / FGSC A1164 / JCM 1740 / NRRL 181 / WB 181) (Aspergillus fischerianus).